Reading from the N-terminus, the 490-residue chain is Betaine aldehyde dehydrogenase (490 aa).

Residue Asp93 participates in K(+) binding. 150–152 (GAW) serves as a coordination point for NAD(+). The active-site Charge relay system is the Lys162. Residue 176–179 (KPSE) participates in NAD(+) binding. Residue Val180 coordinates K(+). 230-233 (GIAS) lines the NAD(+) pocket. Leu246 is a binding site for K(+). Glu252 serves as the catalytic Proton acceptor. Gly254, Cys286, and Glu387 together coordinate NAD(+). The active-site Nucleophile is Cys286. At Cys286 the chain carries Cysteine sulfenic acid (-SOH). The K(+) site is built by Lys457 and Gly460. Glu464 serves as the catalytic Charge relay system.

The protein belongs to the aldehyde dehydrogenase family. Dimer of dimers. It depends on K(+) as a cofactor.

It carries out the reaction betaine aldehyde + NAD(+) + H2O = glycine betaine + NADH + 2 H(+). It participates in amine and polyamine biosynthesis; betaine biosynthesis via choline pathway; betaine from betaine aldehyde: step 1/1. Involved in the biosynthesis of the osmoprotectant glycine betaine. Catalyzes the irreversible oxidation of betaine aldehyde to the corresponding acid. The polypeptide is Betaine aldehyde dehydrogenase (Pectobacterium atrosepticum (strain SCRI 1043 / ATCC BAA-672) (Erwinia carotovora subsp. atroseptica)).